The following is a 109-amino-acid chain: uncharacterized protein (109 aa).

The helical transmembrane segment at 75 to 95 threads the bilayer; it reads MALFHTVFILWPHFCGILWTV.

Its subcellular location is the membrane. This is an uncharacterized protein from Saccharomyces cerevisiae (strain ATCC 204508 / S288c) (Baker's yeast).